The chain runs to 255 residues: Small ribosomal subunit protein eS4 (255 aa).

Positions 44-107 (IPLLILVRDV…DEYYRMIPYP (64 aa)) constitute an S4 RNA-binding domain.

Belongs to the eukaryotic ribosomal protein eS4 family.

The sequence is that of Small ribosomal subunit protein eS4 from Ignicoccus hospitalis (strain KIN4/I / DSM 18386 / JCM 14125).